The chain runs to 322 residues: Fructose-1,6-bisphosphatase class 1 3 (322 aa).

Residues E84, D103, L105, and D106 each coordinate Mg(2+). Substrate is bound by residues 106–109 (DGSS), N198, and K262. E268 serves as a coordination point for Mg(2+).

Belongs to the FBPase class 1 family. Homotetramer. The cofactor is Mg(2+).

It is found in the cytoplasm. It carries out the reaction beta-D-fructose 1,6-bisphosphate + H2O = beta-D-fructose 6-phosphate + phosphate. The protein operates within carbohydrate biosynthesis; gluconeogenesis. The protein is Fructose-1,6-bisphosphatase class 1 3 of Pseudoalteromonas translucida (strain TAC 125).